The sequence spans 101 residues: NADH-quinone oxidoreductase subunit K (101 aa).

The next 3 membrane-spanning stretches (helical) occupy residues 4–24, 29–49, and 61–81; these read LAHYLVLGAILFAIAIVGIFL, IIIILMAIELMLLAVNTNFVA, and IFVFFVLTVAAAEAAIGLAIL.

This sequence belongs to the complex I subunit 4L family. NDH-1 is composed of 14 different subunits. Subunits NuoA, H, J, K, L, M, N constitute the membrane sector of the complex.

Its subcellular location is the cell inner membrane. It catalyses the reaction a quinone + NADH + 5 H(+)(in) = a quinol + NAD(+) + 4 H(+)(out). NDH-1 shuttles electrons from NADH, via FMN and iron-sulfur (Fe-S) centers, to quinones in the respiratory chain. The immediate electron acceptor for the enzyme in this species is believed to be ubiquinone. Couples the redox reaction to proton translocation (for every two electrons transferred, four hydrogen ions are translocated across the cytoplasmic membrane), and thus conserves the redox energy in a proton gradient. In Burkholderia ambifaria (strain MC40-6), this protein is NADH-quinone oxidoreductase subunit K.